The following is a 194-amino-acid chain: Sigma factor AlgU negative regulatory protein (194 aa).

Residues 89 to 105 (LAVAASVTLAVLAGVRL) form a helical membrane-spanning segment.

The protein belongs to the RseA family.

It is found in the cell membrane. Functionally, negative regulator of the sigma factor AlgU. Plays a role in the differentiation of P.aeruginosa into the alginate-producing form. Inactivation of mucA causes a switch from the non-mucoid to mucoid state resulting in constitutive expression of alginate biosynthetic genes. This Pseudomonas aeruginosa (strain ATCC 15692 / DSM 22644 / CIP 104116 / JCM 14847 / LMG 12228 / 1C / PRS 101 / PAO1) protein is Sigma factor AlgU negative regulatory protein (mucA).